Consider the following 561-residue polypeptide: Zinc finger protein 394 (561 aa).

The interval 1–61 (MNSSLTAQRR…NYPAASPDPE (61 aa)) is disordered. Serine 12 is subject to Phosphoserine. Residue lysine 40 forms a Glycyl lysine isopeptide (Lys-Gly) (interchain with G-Cter in SUMO2) linkage. An SCAN box domain is found at 64–146 (RLHFRQLRYQ…AVVRALQRAL (83 aa)). Residues 155–230 (VTFEDTAVSL…LQEAFQGKRP (76 aa)) form the KRAB domain. Residues 182–201 (ESAQKDSGSTVPPSLESRVE) form a disordered region. Residues lysine 203 and lysine 228 each participate in a glycyl lysine isopeptide (Lys-Gly) (interchain with G-Cter in SUMO2) cross-link. The tract at residues 231–285 (LFSKCGSTHEDRVEKQSGDPLPLKLENSPEAEGLNSISDVNKNGSIEGEDSKNNE) is disordered. Positions 237 to 247 (STHEDRVEKQS) are enriched in basic and acidic residues. Residue lysine 254 forms a Glycyl lysine isopeptide (Lys-Gly) (interchain with G-Cter in SUMO2) linkage. The segment covering 265-274 (NSISDVNKNG) has biased composition (polar residues). Residue lysine 282 forms a Glycyl lysine isopeptide (Lys-Gly) (interchain with G-Cter in SUMO2) linkage. C2H2-type zinc fingers lie at residues 358–380 (YKCGNCGKSFKQRSDLFRHQRIH), 386–408 (YGCQECGKSFSQSAALTKHQRTH), 414–436 (YTCLKCGERFRQNSHLNRHQSTH), 442–463 (FKCEECGETCHISNLFRHQRLH), 469–491 (YKCEECEKSFKQRSDLFKHHRIH), 497–519 (YGCSVCGKRFNQSATLIKHQRIH), and 525–547 (YKCLECGERFRQSTHLIRHQRIH). Lysine 443 participates in a covalent cross-link: Glycyl lysine isopeptide (Lys-Gly) (interchain with G-Cter in SUMO2).

It belongs to the krueppel C2H2-type zinc-finger protein family.

The protein resides in the nucleus. May be involved in transcriptional regulation. The sequence is that of Zinc finger protein 394 (ZNF394) from Homo sapiens (Human).